Reading from the N-terminus, the 354-residue chain is Putative Xaa-Pro aminopeptidase (354 aa).

Residues Asp-213, Asp-224, His-290, Glu-319, and Glu-333 each coordinate Mn(2+).

This sequence belongs to the peptidase M24B family. Requires Mn(2+) as cofactor.

The enzyme catalyses Release of any N-terminal amino acid, including proline, that is linked to proline, even from a dipeptide or tripeptide.. The polypeptide is Putative Xaa-Pro aminopeptidase (pepP) (Mycoplasma genitalium (strain ATCC 33530 / DSM 19775 / NCTC 10195 / G37) (Mycoplasmoides genitalium)).